Reading from the N-terminus, the 562-residue chain is Urease subunit alpha (562 aa).

The 432-residue stretch at 131–562 folds into the Urease domain; sequence GGMDCHIHFI…LPMAQRYFLF (432 aa). Ni(2+) is bound by residues His136, His138, and Lys219. Residue Lys219 is modified to N6-carboxylysine. A substrate-binding site is contributed by His221. Positions 248 and 274 each coordinate Ni(2+). His322 acts as the Proton donor in catalysis. Asp362 serves as a coordination point for Ni(2+).

This sequence belongs to the metallo-dependent hydrolases superfamily. Urease alpha subunit family. Heterotrimer of UreA (gamma), UreB (beta) and UreC (alpha) subunits. Three heterotrimers associate to form the active enzyme. Ni cation is required as a cofactor. Carboxylation allows a single lysine to coordinate two nickel ions.

The protein localises to the cytoplasm. It carries out the reaction urea + 2 H2O + H(+) = hydrogencarbonate + 2 NH4(+). Its pathway is nitrogen metabolism; urea degradation; CO(2) and NH(3) from urea (urease route): step 1/1. The polypeptide is Urease subunit alpha (Paracoccus denitrificans (strain Pd 1222)).